Here is a 162-residue protein sequence, read N- to C-terminus: MLNIVLFEPEIPPNTGNIIRLCANTGCQLHLIKPLGFTWDDKRLRRAGLDYHEFADIKHHHDYQAFLDSEKLDSTQPARLFALTTKGTPAHSAVSYQANDYLLFGPETRGLPAYILDALPAQQKIRIPMQADSRSMNLSNAVSVVVYEAWRQLGYPGALLKE.

S-adenosyl-L-methionine contacts are provided by Leu83, Gly105, Ile127, and Ser135.

It belongs to the class IV-like SAM-binding methyltransferase superfamily. RNA methyltransferase TrmH family. TrmL subfamily. As to quaternary structure, homodimer.

Its subcellular location is the cytoplasm. The enzyme catalyses cytidine(34) in tRNA + S-adenosyl-L-methionine = 2'-O-methylcytidine(34) in tRNA + S-adenosyl-L-homocysteine + H(+). It catalyses the reaction 5-carboxymethylaminomethyluridine(34) in tRNA(Leu) + S-adenosyl-L-methionine = 5-carboxymethylaminomethyl-2'-O-methyluridine(34) in tRNA(Leu) + S-adenosyl-L-homocysteine + H(+). In terms of biological role, methylates the ribose at the nucleotide 34 wobble position in the two leucyl isoacceptors tRNA(Leu)(CmAA) and tRNA(Leu)(cmnm5UmAA). Catalyzes the methyl transfer from S-adenosyl-L-methionine to the 2'-OH of the wobble nucleotide. The protein is tRNA (cytidine(34)-2'-O)-methyltransferase of Yersinia pestis.